Reading from the N-terminus, the 75-residue chain is MNPRYRFILRFYSSKKPTFHNTAPSKTNVNVPRANKSQSKGKHKGKLLVLVGTLALVTSVISVNYQKNEPVEFLE.

Over residues 19-38 (FHNTAPSKTNVNVPRANKSQ) the composition is skewed to polar residues. The tract at residues 19 to 42 (FHNTAPSKTNVNVPRANKSQSKGK) is disordered. The helical transmembrane segment at 47-66 (LLVLVGTLALVTSVISVNYQ) threads the bilayer.

Its subcellular location is the membrane. This is an uncharacterized protein from Saccharomyces cerevisiae (strain ATCC 204508 / S288c) (Baker's yeast).